A 536-amino-acid polypeptide reads, in one-letter code: Plasmepsin V (536 aa).

The signal sequence occupies residues 1-34; sequence MVGASLGPPGRGSLSRLIRLVICVLTLCALSVQG. The Lumenal portion of the chain corresponds to 35 to 492; sequence RSESTEGHSK…RKDNIFLKIP (458 aa). One can recognise a Peptidase A1 domain in the interval 62-462; the sequence is YFLDIDIGTP…DIQKNRIGFV (401 aa). The active site involves Asp80. 7 disulfides stabilise this stretch: Cys90–Cys172, Cys93–Cys96, Cys117–Cys128, Cys122–Cys133, Cys220–Cys466, Cys337–Cys382, and Cys391–Cys427. Residues 244–258 show a composition bias toward low complexity; the sequence is SKSVSGQGSGPVSES. Positions 244–264 are disordered; it reads SKSVSGQGSGPVSESLSESGE. Asp313 is an active-site residue. The helical transmembrane segment at 493–513 threads the bilayer; that stretch reads FFYLYSLFVVFALSVLLSLVF. Residues 514–536 lie on the Cytoplasmic side of the membrane; the sequence is YVRRLYHMEYSPLPSEGKAPADA.

The protein belongs to the peptidase A1 family. Component of a complex composed of SPC25 and PMV; the interaction is mediated via the transmembrane domains. The complex interacts with the SEC61 channel-forming translocon complex and is involved in the recognition and import of PEXEL motif-containing proteins into the ER for subsequent export. It is not clear if the zymogen has a cleavable propeptide. Cleavage of the putative propeptide is dispensable for catalytic activity.

It localises to the endoplasmic reticulum membrane. Its activity is regulated as follows. Inhibited by peptidomimetic inhibitors such as WEHI-842. Its function is as follows. During the asexual blood stage, plays an essential role in the export of several proteins into the host erythrocytes by cleaving the pentameric localization motif RxLxE/Q/D (termed Plasmodium export element (PEXEL)) located downstream of the N-terminal secretory signal sequence. Specifically, cleaves after the leucine residue in the RxLxE/Q/D (or RxLxxE) motif of exported proteins including EMP1. Also, by regulating protein export, plays an essential role in gametocyte development and thus parasite transmission to the mosquito vector. The sequence is that of Plasmepsin V from Plasmodium vivax (strain Salvador I).